Here is a 505-residue protein sequence, read N- to C-terminus: Putative F-box protein At1g58310 (505 aa).

Residues R7–S55 form the F-box domain.

This chain is Putative F-box protein At1g58310, found in Arabidopsis thaliana (Mouse-ear cress).